We begin with the raw amino-acid sequence, 240 residues long: Ubiquinone biosynthesis O-methyltransferase (240 aa).

Positions 44, 64, 85, and 129 each coordinate S-adenosyl-L-methionine.

This sequence belongs to the methyltransferase superfamily. UbiG/COQ3 family.

It catalyses the reaction a 3-demethylubiquinol + S-adenosyl-L-methionine = a ubiquinol + S-adenosyl-L-homocysteine + H(+). It carries out the reaction a 3-(all-trans-polyprenyl)benzene-1,2-diol + S-adenosyl-L-methionine = a 2-methoxy-6-(all-trans-polyprenyl)phenol + S-adenosyl-L-homocysteine + H(+). It participates in cofactor biosynthesis; ubiquinone biosynthesis. In terms of biological role, O-methyltransferase that catalyzes the 2 O-methylation steps in the ubiquinone biosynthetic pathway. This is Ubiquinone biosynthesis O-methyltransferase from Escherichia coli (strain ATCC 8739 / DSM 1576 / NBRC 3972 / NCIMB 8545 / WDCM 00012 / Crooks).